A 444-amino-acid chain; its full sequence is Chromosomal replication initiator protein DnaA (444 aa).

The domain I, interacts with DnaA modulators stretch occupies residues 1–66 (MKSEIIESLK…SKTLRELFGK (66 aa)). Positions 66–100 (KPMDFRIEHASAKTEEKLDSNEDEPLVKKRPLILT) are domain II. The segment at 101-317 (PLNPILTFEN…GALVKLIMYQ (217 aa)) is domain III, AAA+ region. 4 residues coordinate ATP: Gly144, Gly146, Lys147, and Thr148. A domain IV, binds dsDNA region spans residues 318-444 (QISGEKVDLQ…VTGQILDQSV (127 aa)).

The protein belongs to the DnaA family. As to quaternary structure, oligomerizes as a right-handed, spiral filament on DNA at oriC.

It is found in the cytoplasm. Its function is as follows. Plays an essential role in the initiation and regulation of chromosomal replication. ATP-DnaA binds to the origin of replication (oriC) to initiate formation of the DNA replication initiation complex once per cell cycle. Binds the DnaA box (a 9 base pair repeat at the origin) and separates the double-stranded (ds)DNA. Forms a right-handed helical filament on oriC DNA; dsDNA binds to the exterior of the filament while single-stranded (ss)DNA is stabiized in the filament's interior. The ATP-DnaA-oriC complex binds and stabilizes one strand of the AT-rich DNA unwinding element (DUE), permitting loading of DNA polymerase. After initiation quickly degrades to an ADP-DnaA complex that is not apt for DNA replication. Binds acidic phospholipids. The chain is Chromosomal replication initiator protein DnaA from Pseudothermotoga lettingae (strain ATCC BAA-301 / DSM 14385 / NBRC 107922 / TMO) (Thermotoga lettingae).